We begin with the raw amino-acid sequence, 372 residues long: Oxoglutarate-dependent flavonoid 7-O-demethylase 1 (372 aa).

The Fe2OG dioxygenase domain occupies 221-321 (GIQALRMNYY…RLSVAAFLNP (101 aa)). The Fe cation site is built by H245, D247, and H302. R312 is a 2-oxoglutarate binding site.

The protein belongs to the iron/ascorbate-dependent oxidoreductase family. In terms of assembly, monomer. Fe(2+) is required as a cofactor. L-ascorbate serves as cofactor. In terms of tissue distribution, accumulates in the trichomes of nevadensin-accumulating strains (e.g. cv. SD and cv. EMX-1) and in cv. SW (at protein level) but not in cv. MC.

The protein localises to the cytoplasm. The enzyme catalyses gardenin B + 2-oxoglutarate + O2 = nevadensin + formaldehyde + succinate + CO2 + H(+). It carries out the reaction 8-hydroxysalvigenin + 2-oxoglutarate + O2 = pilosin + formaldehyde + succinate + CO2. It participates in flavonoid metabolism. Its activity is regulated as follows. Inhibited by prohexadione-calcium, a 2-oxoglutarate-dependent dioxygenase (2-ODD) inhibitor, thus leading to a decreased abundance of nevadensin (NEV) and absence of pilosin (PIL) production, but to the accumulation of gardenin B (GARD B) and 8-hydroxysalvigenin (8-OH-SALV). Its function is as follows. Oxoglutarate-dependent dioxygenase (2-ODD) acting as a flavonoid 7-O-demethylase involved in the biosynthesis of polymethoxylated flavonoids natural products such as nevadensin and salvigenin, aroma compounds which contribute to the flavor of sweet basil, and exhibit pharmacological activities such as anti-allergic, anti-oxidant, antibacterial, anti-proliferative, and anti-inflammatory effects. Catalyzes the 7-O-demethylation of methoxylated flavones; mediates the conversion of 8-hydroxysalvigenin (8-OH-SALV) to pilosin (PIL) and of gardenin B (GARD B) to nevadensin (NEV). The chain is Oxoglutarate-dependent flavonoid 7-O-demethylase 1 from Ocimum basilicum (Sweet basil).